We begin with the raw amino-acid sequence, 336 residues long: Phosphate acyltransferase (336 aa).

This sequence belongs to the PlsX family. In terms of assembly, homodimer. Probably interacts with PlsY.

It is found in the cytoplasm. The catalysed reaction is a fatty acyl-[ACP] + phosphate = an acyl phosphate + holo-[ACP]. It functions in the pathway lipid metabolism; phospholipid metabolism. Catalyzes the reversible formation of acyl-phosphate (acyl-PO(4)) from acyl-[acyl-carrier-protein] (acyl-ACP). This enzyme utilizes acyl-ACP as fatty acyl donor, but not acyl-CoA. This chain is Phosphate acyltransferase, found in Pseudomonas putida (strain GB-1).